A 427-amino-acid chain; its full sequence is Diaminobutyrate--2-oxoglutarate transaminase (427 aa).

K264 bears the N6-(pyridoxal phosphate)lysine mark.

This sequence belongs to the class-III pyridoxal-phosphate-dependent aminotransferase family. It depends on pyridoxal 5'-phosphate as a cofactor.

It catalyses the reaction L-2,4-diaminobutanoate + 2-oxoglutarate = L-aspartate 4-semialdehyde + L-glutamate. Its pathway is amine and polyamine biosynthesis; ectoine biosynthesis; L-ectoine from L-aspartate 4-semialdehyde: step 1/3. Its function is as follows. Catalyzes reversively the conversion of L-aspartate beta-semialdehyde (ASA) to L-2,4-diaminobutyrate (DABA) by transamination with L-glutamate. The sequence is that of Diaminobutyrate--2-oxoglutarate transaminase (ectB) from Wolinella succinogenes (strain ATCC 29543 / DSM 1740 / CCUG 13145 / JCM 31913 / LMG 7466 / NCTC 11488 / FDC 602W) (Vibrio succinogenes).